A 226-amino-acid chain; its full sequence is Urease accessory protein UreF (226 aa).

The protein belongs to the UreF family. As to quaternary structure, ureD, UreF and UreG form a complex that acts as a GTP-hydrolysis-dependent molecular chaperone, activating the urease apoprotein by helping to assemble the nickel containing metallocenter of UreC. The UreE protein probably delivers the nickel.

Its subcellular location is the cytoplasm. Functionally, required for maturation of urease via the functional incorporation of the urease nickel metallocenter. The polypeptide is Urease accessory protein UreF (Burkholderia cenocepacia (strain HI2424)).